The primary structure comprises 265 residues: MIKWPWKVQESAHQTALPWQEALSIPLLTGLTEQEQSKLVTLAERFLQQKRLVPLQGFELDSLRSCRIALLFCLPVLELGLEWLDGFHEVLIYPAPFVVDDEWEDDIGLVHNQRIVQSGQSWQQGPIVLNWLDIQDSFDASGFNLIIHEVAHKLDTRNGDRASGVPFIPLREVAGWEHDLHAAMNNIQEEIELVGENAASIDAYAASDPAECFAVLSEYFFSAPELFAPRFPSLWQRFCQFYQQDPLQRLHHANDTDSFSATNVH.

Histidine 111, histidine 148, histidine 152, and glutamate 211 together coordinate Zn(2+).

The protein belongs to the MtfA family. As to quaternary structure, interacts with Mlc. It depends on Zn(2+) as a cofactor.

The protein localises to the cytoplasm. Functionally, involved in the modulation of the activity of the glucose-phosphotransferase system (glucose-PTS). Interacts with the transcriptional repressor Mlc, preventing its interaction with DNA and leading to the modulation of expression of genes regulated by Mlc, including ptsG, which encodes the PTS system glucose-specific EIICB component. Its function is as follows. Shows zinc-dependent metallopeptidase activity. This Shigella sonnei (strain Ss046) protein is Mlc titration factor A.